The chain runs to 492 residues: Amphoterin-induced protein 1 (492 aa).

The N-terminal stretch at 1-27 (MQPQRDLRGLWLLLLSVFLLLFEVARA) is a signal peptide. Residues 28-61 (GRSVVSCPANCLCASNILSCSKQQLPNVPQSLPS) enclose the LRRNT domain. Residues 28-371 (GRSVVSCPAN…LHGHHDTLNT (344 aa)) lie on the Extracellular side of the membrane. Intrachain disulfides connect Cys34–Cys40 and Cys38–Cys47. 6 LRR repeats span residues 62–83 (YTAL…WTPT), 87–108 (NLHS…AFVP), 111–132 (NLRY…LFSD), 135–156 (ALEV…AFED), 159–180 (QLQK…LIKD), and 186–206 (KLML…TDLQ). Residue Asn72 is glycosylated (N-linked (GlcNAc...) asparagine). Residues 208 to 272 (LPAWVKNGLY…FSLDFFNCSE (65 aa)) enclose the LRRCT domain. 3 cysteine pairs are disulfide-bonded: Cys225–Cys253, Cys227–Cys270, and Cys290–Cys340. N-linked (GlcNAc...) asparagine glycosylation is found at Asn269, Asn315, Asn348, and Asn359. The Ig-like C2-type domain maps to 269-352 (NCSEYKESAW…MGETFNETLS (84 aa)). Residues 372 to 392 (AYTTLVGCILSVVLVLIYLYL) traverse the membrane as a helical segment. Topologically, residues 393–492 (TPCRCWCRGV…SVFSDTPIVV (100 aa)) are cytoplasmic. Residues 404 to 492 (KPSSHQGDSL…SVFSDTPIVV (89 aa)) form a disordered region. The segment covering 407-423 (SHQGDSLSSSMLSTTPN) has biased composition (polar residues). The segment covering 430–441 (GDKDDGFDRRVA) has biased composition (basic and acidic residues). Residues Ser476 and Ser480 each carry the phosphoserine modification.

The protein belongs to the immunoglobulin superfamily. AMIGO family. As to quaternary structure, homodimer, and heterodimer with AMIGO2 and AMIGO3. Interacts with KCNB1. Expressed in hippocampal and cortical neurons (at protein level). High levels in cerebellum, cerebrum, and retina. Low levels in liver, kidney, small intestine, spleen, lung and heart.

The protein localises to the cell membrane. It is found in the perikaryon. Its subcellular location is the cell projection. The protein resides in the dendrite. In terms of biological role, promotes growth and fasciculation of neurites from cultured hippocampal neurons. May be involved in fasciculation as well as myelination of developing neural axons. May have a role in regeneration as well as neural plasticity in the adult nervous system. May mediate homophilic as well as heterophilic cell-cell interaction and contribute to signal transduction through its intracellular domain. Assembled with KCNB1 modulates the gating characteristics of the delayed rectifier voltage-dependent potassium channel KCNB1. This Mus musculus (Mouse) protein is Amphoterin-induced protein 1.